Consider the following 505-residue polypeptide: Maturase K (505 aa).

It belongs to the intron maturase 2 family. MatK subfamily.

The protein localises to the plastid. It localises to the chloroplast. Its function is as follows. Usually encoded in the trnK tRNA gene intron. Probably assists in splicing its own and other chloroplast group II introns. This is Maturase K from Nuphar variegata (Yellow pond lily).